The sequence spans 462 residues: MQKVLGRIQAQVLRSRATNALANVVRHEATSSRTAAKPAATSKEFRERQVRFNIKNEQTEGRPLYLDAQATTPMDPRVLDAMLPYLTNFYGNPHSRTHAYGWETESAVEKAREQVATLIGADPKEIIFTSGATESNNIAVKGVARFYGTKKRHVITTQTEHKCVLDSCRALENEGFKVTYLPVLANGLIDLQQLEETITSETSLVSIMTVNNEIGVRQPVDEIGKLCRSRRVFFHTDAAQAVGKVPLDVNAMNIDLMSISGHKIYGPKGVGALYVRRRPRVRLEPIQSGGGQERGLRSGTVPAPLAVGLGAAAELSLREMDYDKKWVDFLSNRLLDRISSALPHVIRNGDAKATYNGCLNLSFAYVEGESLLMALKDVALSSGSACTSASLEPSYVLRAIGTDEDLAHSSIRFGIGRFTTVEEVDYTADKCIKHVERLREMSPLWEMVQEGIDLKTIQWSQH.

Pyridoxal 5'-phosphate is bound by residues 132–133, Asn212, Gln240, and 260–262; these read AT and SGH. Position 263 is an N6-(pyridoxal phosphate)lysine (Lys263). Thr300 lines the pyridoxal 5'-phosphate pocket. The active-site Cysteine persulfide intermediate is Cys386. Position 386 (Cys386) interacts with [2Fe-2S] cluster.

The protein belongs to the class-V pyridoxal-phosphate-dependent aminotransferase family. NifS/IscS subfamily. Component of the mitochondrial core iron-sulfur cluster (ISC) assembly complex at least composed of the cystein desulfurase Nfs1, the scaffold protein IscU, the accessory protein bcn92/Isd11/Lyrm4, and probably fh/frataxin. Interacts with bcn92/Isd11/Lyrm4 and IscU. It depends on pyridoxal 5'-phosphate as a cofactor. Ubiquitous expression at high levels in any life stage.

It is found in the mitochondrion. Its subcellular location is the nucleus. The catalysed reaction is (sulfur carrier)-H + L-cysteine = (sulfur carrier)-SH + L-alanine. With respect to regulation, active when in complex with bcn92/Isd11/Lyrm4. L-cysteine binding kinetics are reduced in the presence of bcn92/Isd11/Lyrm4 and IscU. Activity is regulated by other components of the mitochondrial core iron-sulfur cluster (ISC) complex; Activity is reduced in the presence of IscU but enhanced when both IscU and fh/frataxin are present. Catalyzes the removal of elemental sulfur from cysteine to produce alanine. It supplies the inorganic sulfur for iron-sulfur (Fe-S) clusters. The protein is Cysteine desulfurase, mitochondrial of Drosophila melanogaster (Fruit fly).